A 648-amino-acid chain; its full sequence is Rab11 family-interacting protein 1 (648 aa).

Residues 1–129 form the C2 domain; the sequence is MSLAASAGRG…DQSRRKKQWY (129 aa). Positions 164 to 188 are enriched in basic and acidic residues; it reads SMKDKSRNPFGKLKDKIKGKNKDNT. Disordered regions lie at residues 164–470, 483–503, and 516–555; these read SMKD…GRKG, VRRP…SQNP, and VESK…PKIT. Residues 189-201 are compositionally biased toward polar residues; sequence SDTASAIVPSTTP. Phosphoserine occurs at positions 205, 209, and 237. 2 stretches are compositionally biased toward polar residues: residues 227–242 and 271–296; these read PSLQ…SVLP and SSAS…SNFS. Serine 304, serine 319, serine 343, serine 345, serine 347, serine 349, serine 360, serine 361, and serine 386 each carry phosphoserine. Residues 314–323 show a composition bias toward polar residues; the sequence is DSLSRSNVCI. 2 stretches are compositionally biased toward basic and acidic residues: residues 381 to 394 and 422 to 436; these read SDRR…KDSM and ATKE…ESKK. Serine 438 bears the Phosphoserine mark. A compositionally biased stretch (basic and acidic residues) spans 445-454; that stretch reads GKKDVAKGSE. The FIP-RBD domain occupies 576 to 638; that stretch reads KKYQPSDPAF…EETPNILRVP (63 aa). A necessary for interaction with RAB4A and RAB11A, subcellular location and endosomal recycling region spans residues 584–648; that stretch reads AFAYAQLTHD…AQTGKKAGKM (65 aa).

As to quaternary structure, homooligomer. Interacts with RAB11A, RAB11B, RAB25, RAB4A and RAB14.

It is found in the recycling endosome. The protein resides in the cytoplasmic vesicle. A Rab11 effector protein involved in the endosomal recycling process. Also involved in controlling membrane trafficking along the phagocytic pathway and in phagocytosis. Interaction with RAB14 may function in the process of neurite formation. The sequence is that of Rab11 family-interacting protein 1 from Rattus norvegicus (Rat).